The primary structure comprises 690 residues: Calpain-9 (690 aa).

A disordered region spans residues 1–24 (MPYLYRAPGPQAHPVPKDARITHS). The Calpain catalytic domain maps to 42–337 (LFEDADFPAS…FDKVEICNLT (296 aa)). Residues Leu81, Gly83, and Asp88 each coordinate Ca(2+). Cys97 is a catalytic residue. Glu167 lines the Ca(2+) pocket. Residues His254 and Asn278 contribute to the active site. Positions 284, 291, 312, 314, and 316 each coordinate Ca(2+). A domain III region spans residues 338-521 (PDALEEDAIH…PPDQETEEEQ (184 aa)). Residues 498–519 (GNVDIDLPEPPKPTPPDQETEE) are disordered. EF-hand domains lie at 518-552 (EEEQRFRALFEQVAGEDMEVTAEELEYVLNAVLQK), 561-589 (LSLISCKNIISLMDTSGNGKLEFDEFKVF), and 591-626 (DKLKQWINLFLRFDADKSGTMSTYELRTALKAAGFQ). Residues 522–690 (RFRALFEQVA…NEFIHLTMNI (169 aa)) form a domain IV region. The Ca(2+) site is built by Asp574, Ser576, Asn578, Lys580, Glu585, Asp604, Asp606, Ser608, Thr610, and Glu615.

Belongs to the peptidase C2 family. Expressed predominantly in stomach.

Its function is as follows. Calcium-regulated non-lysosomal thiol-protease. This chain is Calpain-9 (CAPN9), found in Homo sapiens (Human).